A 363-amino-acid polypeptide reads, in one-letter code: Phosphoserine aminotransferase (363 aa).

Arg-42 is an L-glutamate binding site. Pyridoxal 5'-phosphate-binding positions include 76–77 (GR), Trp-102, Thr-156, Asp-175, and Gln-198. N6-(pyridoxal phosphate)lysine is present on Lys-199. Residue 240 to 241 (NT) coordinates pyridoxal 5'-phosphate.

This sequence belongs to the class-V pyridoxal-phosphate-dependent aminotransferase family. SerC subfamily. Homodimer. Pyridoxal 5'-phosphate serves as cofactor.

The protein localises to the cytoplasm. The catalysed reaction is O-phospho-L-serine + 2-oxoglutarate = 3-phosphooxypyruvate + L-glutamate. It catalyses the reaction 4-(phosphooxy)-L-threonine + 2-oxoglutarate = (R)-3-hydroxy-2-oxo-4-phosphooxybutanoate + L-glutamate. The protein operates within amino-acid biosynthesis; L-serine biosynthesis; L-serine from 3-phospho-D-glycerate: step 2/3. Its pathway is cofactor biosynthesis; pyridoxine 5'-phosphate biosynthesis; pyridoxine 5'-phosphate from D-erythrose 4-phosphate: step 3/5. Functionally, catalyzes the reversible conversion of 3-phosphohydroxypyruvate to phosphoserine and of 3-hydroxy-2-oxo-4-phosphonooxybutanoate to phosphohydroxythreonine. This Shewanella baltica (strain OS185) protein is Phosphoserine aminotransferase.